A 288-amino-acid polypeptide reads, in one-letter code: Probable endonuclease 4 (288 aa).

Zn(2+) is bound by residues H75, H115, E153, D187, H190, H224, D237, H239, and E269.

The protein belongs to the AP endonuclease 2 family. It depends on Zn(2+) as a cofactor.

The catalysed reaction is Endonucleolytic cleavage to 5'-phosphooligonucleotide end-products.. Functionally, endonuclease IV plays a role in DNA repair. It cleaves phosphodiester bonds at apurinic or apyrimidinic (AP) sites, generating a 3'-hydroxyl group and a 5'-terminal sugar phosphate. This is Probable endonuclease 4 from Chlamydia trachomatis serovar L2 (strain ATCC VR-902B / DSM 19102 / 434/Bu).